Here is a 619-residue protein sequence, read N- to C-terminus: Dihydroxy-acid dehydratase (619 aa).

Asp81 serves as a coordination point for Mg(2+). Cys122 contacts [2Fe-2S] cluster. Residues Asp123 and Lys124 each coordinate Mg(2+). The residue at position 124 (Lys124) is an N6-carboxylysine. Residue Cys201 coordinates [2Fe-2S] cluster. Mg(2+) is bound at residue Glu496. Ser522 functions as the Proton acceptor in the catalytic mechanism.

The protein belongs to the IlvD/Edd family. As to quaternary structure, homodimer. It depends on [2Fe-2S] cluster as a cofactor. Requires Mg(2+) as cofactor.

The enzyme catalyses (2R)-2,3-dihydroxy-3-methylbutanoate = 3-methyl-2-oxobutanoate + H2O. The catalysed reaction is (2R,3R)-2,3-dihydroxy-3-methylpentanoate = (S)-3-methyl-2-oxopentanoate + H2O. The protein operates within amino-acid biosynthesis; L-isoleucine biosynthesis; L-isoleucine from 2-oxobutanoate: step 3/4. Its pathway is amino-acid biosynthesis; L-valine biosynthesis; L-valine from pyruvate: step 3/4. Functions in the biosynthesis of branched-chain amino acids. Catalyzes the dehydration of (2R,3R)-2,3-dihydroxy-3-methylpentanoate (2,3-dihydroxy-3-methylvalerate) into 2-oxo-3-methylpentanoate (2-oxo-3-methylvalerate) and of (2R)-2,3-dihydroxy-3-methylbutanoate (2,3-dihydroxyisovalerate) into 2-oxo-3-methylbutanoate (2-oxoisovalerate), the penultimate precursor to L-isoleucine and L-valine, respectively. The polypeptide is Dihydroxy-acid dehydratase (Burkholderia vietnamiensis (strain G4 / LMG 22486) (Burkholderia cepacia (strain R1808))).